Reading from the N-terminus, the 418-residue chain is MGSATLLKESGPREVFCGLTSIVWLHRRMPDAFFLVVGSRTCAHLIQSAAGVMIFAEPRFGTAILGEKDLAGLADAHDELDRVVNDLLARRPEIRTLFLVGSCPSEVIKLDLARVAERLNGELQGRVRVLNYSGSGIETTFTQGEDGALKAMVPLMPNSNEAQLLLVGTMANAVEDRLIHLFERLGIPSVSSLPPRQSTDLPSVGPGTRVLLTQPYLTDTARELKDRGAEILQAPFPLGAEGSRLWMEAAAKAFGINNNHVANTLAPLIERAQKALSPYKEQLAGKRIFLMPESQLEIPLARFLHRECGMELVEVGVPYLNREMMQSELELLPQNTPVMEGQHVEKQLDRVREQRPDLVVCGMGLANPLEAEEIATKWSIELIFSPIHGIDQAADLAELFARPLHRRNLLNNQLLVSV.

Positions 17, 42, and 103 each coordinate [4Fe-4S] cluster.

It belongs to the BchN/ChlN family. As to quaternary structure, protochlorophyllide reductase is composed of three subunits; ChlL, ChlN and ChlB. Forms a heterotetramer of two ChlB and two ChlN subunits. [4Fe-4S] cluster is required as a cofactor.

The catalysed reaction is chlorophyllide a + oxidized 2[4Fe-4S]-[ferredoxin] + 2 ADP + 2 phosphate = protochlorophyllide a + reduced 2[4Fe-4S]-[ferredoxin] + 2 ATP + 2 H2O. The protein operates within porphyrin-containing compound metabolism; chlorophyll biosynthesis (light-independent). Component of the dark-operative protochlorophyllide reductase (DPOR) that uses Mg-ATP and reduced ferredoxin to reduce ring D of protochlorophyllide (Pchlide) to form chlorophyllide a (Chlide). This reaction is light-independent. The NB-protein (ChlN-ChlB) is the catalytic component of the complex. This Prochlorococcus marinus (strain MIT 9313) protein is Light-independent protochlorophyllide reductase subunit N.